The following is a 370-amino-acid chain: Actin-related protein 2/3 complex subunit 1A (370 aa).

WD repeat units lie at residues 6–45 (FLLE…WVKA), 50–89 (EHNG…WKPT), 140–179 (PIRS…VDEK), 202–241 (GTGG…QVST), 244–284 (TEFL…TFVS), and 322–365 (LHQN…SSIQ).

This sequence belongs to the WD repeat ARPC1 family. As to quaternary structure, probable component of the Arp2/3 complex in which it may replace ARPC1B. In addition to its role in the cytoplasmic cytoskeleton, the Arp2/3 complex also promotes actin polymerization in the nucleus, thereby regulating gene transcription and repair of damaged DNA.

It localises to the cytoplasm. The protein resides in the cytoskeleton. The protein localises to the nucleus. In terms of biological role, probably functions as a component of the Arp2/3 complex which is involved in regulation of actin polymerization and together with an activating nucleation-promoting factor (NPF) mediates the formation of branched actin networks. In Homo sapiens (Human), this protein is Actin-related protein 2/3 complex subunit 1A (ARPC1A).